The sequence spans 295 residues: Protease HtpX (295 aa).

A run of 2 helical transmembrane segments spans residues 4–24 (ILLF…TLSL) and 41–61 (SSLL…SLFI). Position 147 (H147) interacts with Zn(2+). The active site involves E148. H151 is a binding site for Zn(2+). A run of 2 helical transmembrane segments spans residues 158–178 (VTLA…ARII) and 199–219 (VATI…VMWF). E224 provides a ligand contact to Zn(2+).

It belongs to the peptidase M48B family. Zn(2+) is required as a cofactor.

It is found in the cell inner membrane. This is Protease HtpX from Pseudomonas putida (strain ATCC 47054 / DSM 6125 / CFBP 8728 / NCIMB 11950 / KT2440).